The chain runs to 156 residues: Ribosomal RNA large subunit methyltransferase H (156 aa).

S-adenosyl-L-methionine contacts are provided by residues L73, G104, and 123-128; that span reads LSSLTL.

This sequence belongs to the RNA methyltransferase RlmH family. Homodimer.

The protein localises to the cytoplasm. The catalysed reaction is pseudouridine(1915) in 23S rRNA + S-adenosyl-L-methionine = N(3)-methylpseudouridine(1915) in 23S rRNA + S-adenosyl-L-homocysteine + H(+). Functionally, specifically methylates the pseudouridine at position 1915 (m3Psi1915) in 23S rRNA. In Neisseria gonorrhoeae (strain ATCC 700825 / FA 1090), this protein is Ribosomal RNA large subunit methyltransferase H.